The sequence spans 155 residues: Ribosome maturation factor RimP (155 aa).

The protein belongs to the RimP family.

Its subcellular location is the cytoplasm. Functionally, required for maturation of 30S ribosomal subunits. In Prochlorococcus marinus (strain MIT 9515), this protein is Ribosome maturation factor RimP.